A 342-amino-acid chain; its full sequence is Anthranilate phosphoribosyltransferase (342 aa).

5-phospho-alpha-D-ribose 1-diphosphate contacts are provided by residues G90, 93-94 (GD), T98, 100-103 (NIST), 118-126 (KHGNRSVSS), and A130. G90 provides a ligand contact to anthranilate. S102 is a Mg(2+) binding site. Residue N121 coordinates anthranilate. R176 provides a ligand contact to anthranilate. Positions 234 and 235 each coordinate Mg(2+).

It belongs to the anthranilate phosphoribosyltransferase family. As to quaternary structure, homodimer. Mg(2+) serves as cofactor.

It catalyses the reaction N-(5-phospho-beta-D-ribosyl)anthranilate + diphosphate = 5-phospho-alpha-D-ribose 1-diphosphate + anthranilate. It participates in amino-acid biosynthesis; L-tryptophan biosynthesis; L-tryptophan from chorismate: step 2/5. In terms of biological role, catalyzes the transfer of the phosphoribosyl group of 5-phosphorylribose-1-pyrophosphate (PRPP) to anthranilate to yield N-(5'-phosphoribosyl)-anthranilate (PRA). This is Anthranilate phosphoribosyltransferase from Mannheimia succiniciproducens (strain KCTC 0769BP / MBEL55E).